A 238-amino-acid chain; its full sequence is Survival of motor neuron-related-splicing factor 30 (238 aa).

The Tudor domain maps to 72–132 (SWKVGDKCMA…KPVEEGRKAK (61 aa)). Residues 142 to 160 (KKEMIAQQREYKKKKALKK) carry the Nuclear localization signal motif. At Ser201 the chain carries Phosphoserine. Position 219 is an N6-acetyllysine (Lys219).

The protein belongs to the SMN family. Associates with spliceosomes. Associates with U4/U5/U6 tri-snRNP and with U2 snRNP. Interacts (via Tudor domain) with SNRPD3 (via C-terminus); the interaction is direct. Detected at intermediate levels in skeletal muscle, and at low levels in heart and pancreas.

Its subcellular location is the nucleus speckle. The protein resides in the nucleus. It localises to the cajal body. Its function is as follows. Involved in spliceosome assembly. The chain is Survival of motor neuron-related-splicing factor 30 (SMNDC1) from Homo sapiens (Human).